The primary structure comprises 174 residues: Protein TM_1551 (174 aa).

The AMMECR1 domain occupies 2–174 (IGEHPYVKWA…IYRFTVERYK (173 aa)).

The polypeptide is Protein TM_1551 (Thermotoga maritima (strain ATCC 43589 / DSM 3109 / JCM 10099 / NBRC 100826 / MSB8)).